The sequence spans 396 residues: E3 ubiquitin-protein transferase MAEA (396 aa).

The tract at residues 1 to 124 (MAVQESAVQL…AAASVWKRKR (124 aa)) is extracellular and involved in cell to cell contact. Thr-28 bears the Phosphothreonine mark. The region spanning 121 to 153 (KRKRMDRMMVEHLLRCGYYNTAVKLARQSGIED) is the LisH domain. A CTLH domain is found at 159–216 (MFLTAKEVEESLERRETATCLAWCHDNKSRLRKMKSCLEFSLRIQEFIELIRQNKRLD). The RING-Gid-type zinc finger occupies 314 to 381 (CPVCSRSLNK…QDDKVVCPRT (68 aa)).

As to quaternary structure, identified in the CTLH complex that contains GID4, RANBP9 and/or RANBP10, MKLN1, MAEA, RMND5A (or alternatively its paralog RMND5B), GID8, ARMC8, WDR26 and YPEL5. Within this complex, MAEA, RMND5A (or alternatively its paralog RMND5B), GID8, WDR26, and RANBP9 and/or RANBP10 form the catalytic core, while GID4, MKLN1, ARMC8 and YPEL5 have ancillary roles. Interacts with F-actin. In terms of processing, autoubiquitinated as component of the CTLH E3 ubiquitin-protein ligase complex (in vitro).

Its subcellular location is the cytoplasm. The protein localises to the nucleus. The protein resides in the nucleoplasm. It is found in the nucleus matrix. It localises to the cell membrane. Its subcellular location is the cytoskeleton. It catalyses the reaction S-ubiquitinyl-[E2 ubiquitin-conjugating enzyme]-L-cysteine + [acceptor protein]-L-lysine = [E2 ubiquitin-conjugating enzyme]-L-cysteine + N(6)-ubiquitinyl-[acceptor protein]-L-lysine.. Functionally, core component of the CTLH E3 ubiquitin-protein ligase complex that selectively accepts ubiquitin from UBE2H and mediates ubiquitination and subsequent proteasomal degradation of the transcription factor HBP1. MAEA and RMND5A are both required for catalytic activity of the CTLH E3 ubiquitin-protein ligase complex. MAEA is required for normal cell proliferation. The CTLH E3 ubiquitin-protein ligase complex is not required for the degradation of enzymes involved in gluconeogenesis, such as FBP1. Plays a role in erythroblast enucleation during erythrocyte maturation and in the development of mature macrophages. Mediates the attachment of erythroid cell to mature macrophages; this MAEA-mediated contact inhibits erythroid cell apoptosis. Participates in erythroblastic island formation, which is the functional unit of definitive erythropoiesis. Associates with F-actin to regulate actin distribution in erythroblasts and macrophages. May contribute to nuclear architecture and cells division events. In Macaca fascicularis (Crab-eating macaque), this protein is E3 ubiquitin-protein transferase MAEA (MAEA).